The following is a 327-amino-acid chain: GMP reductase (327 aa).

Residue C175 is the Thioimidate intermediate of the active site. Residue 204–227 (IIADGGIRTHGDIAKSVRFGASMV) coordinates NADP(+).

Belongs to the IMPDH/GMPR family. GuaC type 2 subfamily.

It carries out the reaction IMP + NH4(+) + NADP(+) = GMP + NADPH + 2 H(+). Catalyzes the irreversible NADPH-dependent deamination of GMP to IMP. It functions in the conversion of nucleobase, nucleoside and nucleotide derivatives of G to A nucleotides, and in maintaining the intracellular balance of A and G nucleotides. The protein is GMP reductase of Lysinibacillus sphaericus (strain C3-41).